A 398-amino-acid chain; its full sequence is Succinate--CoA ligase [ADP-forming] subunit beta (398 aa).

Positions 9-254 (KALLHEFGVP…ETEEDAKEIE (246 aa)) constitute an ATP-grasp domain. ATP is bound by residues lysine 46, 53–55 (GRG), glutamate 109, serine 112, and glutamate 117. Asparagine 209 and aspartate 223 together coordinate Mg(2+). Substrate contacts are provided by residues asparagine 274 and 331-333 (GIM).

Belongs to the succinate/malate CoA ligase beta subunit family. Heterotetramer of two alpha and two beta subunits. It depends on Mg(2+) as a cofactor.

The enzyme catalyses succinate + ATP + CoA = succinyl-CoA + ADP + phosphate. It carries out the reaction GTP + succinate + CoA = succinyl-CoA + GDP + phosphate. It participates in carbohydrate metabolism; tricarboxylic acid cycle; succinate from succinyl-CoA (ligase route): step 1/1. Its function is as follows. Succinyl-CoA synthetase functions in the citric acid cycle (TCA), coupling the hydrolysis of succinyl-CoA to the synthesis of either ATP or GTP and thus represents the only step of substrate-level phosphorylation in the TCA. The beta subunit provides nucleotide specificity of the enzyme and binds the substrate succinate, while the binding sites for coenzyme A and phosphate are found in the alpha subunit. This chain is Succinate--CoA ligase [ADP-forming] subunit beta, found in Bradyrhizobium sp. (strain ORS 278).